The chain runs to 1339 residues: Retrotransposon Gag-like protein 9 (1339 aa).

Composition is skewed to polar residues over residues 533 to 545 (TVPT…TQKT), 679 to 693 (SGTK…TTSG), and 700 to 711 (TRLSGPGATSTP). Disordered regions lie at residues 533–555 (TVPT…PMST), 679–711 (SGTK…TSTP), 845–864 (GVMS…SRPQ), 880–901 (PATA…LSTL), 982–1010 (ATSL…GAGS), and 1078–1116 (ATDS…PPKE). A compositionally biased stretch (low complexity) spans 891-901 (RSPASSTLSTL). Positions 1078-1106 (ATDSGEASTSHTRFTAPGSKSTPHMTSTA) are enriched in polar residues.

This chain is Retrotransposon Gag-like protein 9, found in Mus musculus (Mouse).